The following is a 657-amino-acid chain: Heat shock protein hsp-6 (657 aa).

Residues 1–27 (MLSARSFLSSARTIARSSLMSARSLSD) constitute a mitochondrion transit peptide. The interval 637–657 (KNSGGDAQEAKTAEEPKKEQN) is disordered. The span at 644 to 657 (QEAKTAEEPKKEQN) shows a compositional bias: basic and acidic residues.

Belongs to the heat shock protein 70 family.

It is found in the mitochondrion. The protein is Heat shock protein hsp-6 of Caenorhabditis elegans.